A 1176-amino-acid polypeptide reads, in one-letter code: DNA-directed RNA polymerase subunit beta (1176 aa).

Over residues 13-30 (TDASLHQGRPQSSSNSSV) the composition is skewed to polar residues. The tract at residues 13-35 (TDASLHQGRPQSSSNSSVPGAPN) is disordered.

The protein belongs to the RNA polymerase beta chain family. The RNAP catalytic core consists of 2 alpha, 1 beta, 1 beta' and 1 omega subunit. When a sigma factor is associated with the core the holoenzyme is formed, which can initiate transcription.

The enzyme catalyses RNA(n) + a ribonucleoside 5'-triphosphate = RNA(n+1) + diphosphate. Functionally, DNA-dependent RNA polymerase catalyzes the transcription of DNA into RNA using the four ribonucleoside triphosphates as substrates. The sequence is that of DNA-directed RNA polymerase subunit beta from Mycobacterium ulcerans (strain Agy99).